The sequence spans 226 residues: NADH-ubiquinone oxidoreductase chain 6 (226 aa).

6 helical membrane-spanning segments follow: residues 1 to 21, 27 to 47, 52 to 72, 94 to 114, 126 to 146, and 185 to 205; these read MNNFLLDFLALGAVLSGILVI, VISVLFLISVFVNVAGYLVLL, IGISYLIVYIGAVTVLFLFVI, PLATIIGSLLLFELVSVVPSF, IFKFLGVGILNWFNSLSLGVG, and ALWLIVSSLILLLAMVGPITL.

It belongs to the complex I subunit 6 family.

The protein resides in the mitochondrion inner membrane. The enzyme catalyses a ubiquinone + NADH + 5 H(+)(in) = a ubiquinol + NAD(+) + 4 H(+)(out). Its function is as follows. Core subunit of the mitochondrial membrane respiratory chain NADH dehydrogenase (Complex I) that is believed to belong to the minimal assembly required for catalysis. Complex I functions in the transfer of electrons from NADH to the respiratory chain. The immediate electron acceptor for the enzyme is believed to be ubiquinone. The polypeptide is NADH-ubiquinone oxidoreductase chain 6 (ND6) (Mycosarcoma maydis (Corn smut fungus)).